A 297-amino-acid polypeptide reads, in one-letter code: Universal stress protein MT2698 (297 aa).

ATP contacts are provided by residues Gly-13, Ala-43, 117–123 (GCLGSGR), Arg-127, 131–132 (SV), Gly-165, Asp-198, 262–268 (GSRGRGG), and 276–278 (SVG).

It belongs to the universal stress protein A family. In terms of assembly, homodimer.

In terms of biological role, may play a role in the establishment of a persistent infection (latency) in the host. The polypeptide is Universal stress protein MT2698 (Mycobacterium tuberculosis (strain CDC 1551 / Oshkosh)).